Here is a 218-residue protein sequence, read N- to C-terminus: Adenylate kinase (218 aa).

12-17 (GAGKGT) lines the ATP pocket. The segment at 32 to 61 (STGDMLREARSSGTEMGKRVAEVMDRGELV) is NMP. Residues threonine 33, arginine 38, 59 to 61 (ELV), 85 to 88 (GFPR), and glutamine 92 contribute to the AMP site. The LID stretch occupies residues 126 to 164 (GRFTCGNCGEVYHDVTKPTKEPGKCDVCGSTDLRRRADD). Arginine 127 contacts ATP. Cysteine 130 and cysteine 133 together coordinate Zn(2+). 136–137 (VY) is an ATP binding site. Residues cysteine 150 and cysteine 153 each coordinate Zn(2+). The AMP site is built by arginine 161 and arginine 172. Alanine 200 contributes to the ATP binding site.

The protein belongs to the adenylate kinase family. As to quaternary structure, monomer.

Its subcellular location is the cytoplasm. It carries out the reaction AMP + ATP = 2 ADP. It functions in the pathway purine metabolism; AMP biosynthesis via salvage pathway; AMP from ADP: step 1/1. Its function is as follows. Catalyzes the reversible transfer of the terminal phosphate group between ATP and AMP. Plays an important role in cellular energy homeostasis and in adenine nucleotide metabolism. In Paracoccus denitrificans (strain Pd 1222), this protein is Adenylate kinase.